The following is a 310-amino-acid chain: Glutamyl-Q tRNA(Asp) synthetase (310 aa).

L-glutamate contacts are provided by residues 8–12 (RFAPS) and glutamate 44. The 'HIGH' region motif lies at 11–21 (PSPTGPLHLGS). Positions 100, 102, 123, and 127 each coordinate Zn(2+). Residues tyrosine 183 and arginine 201 each coordinate L-glutamate. Residues 239–243 (KLSKQ) carry the 'KMSKS' region motif. Lysine 242 contacts ATP.

It belongs to the class-I aminoacyl-tRNA synthetase family. GluQ subfamily. Zn(2+) serves as cofactor.

In terms of biological role, catalyzes the tRNA-independent activation of glutamate in presence of ATP and the subsequent transfer of glutamate onto a tRNA(Asp). Glutamate is transferred on the 2-amino-5-(4,5-dihydroxy-2-cyclopenten-1-yl) moiety of the queuosine in the wobble position of the QUC anticodon. In Cupriavidus metallidurans (strain ATCC 43123 / DSM 2839 / NBRC 102507 / CH34) (Ralstonia metallidurans), this protein is Glutamyl-Q tRNA(Asp) synthetase.